The chain runs to 215 residues: Fanconi anemia core complex-associated protein 24 (215 aa).

The ruvA domain 2-like stretch occupies residues 160–215 (LRTVQQIPGVGKVKAPLLLQKFPSIQQLSNASIGELEQVVGQAVAQQIHAFFTQPR).

As to quaternary structure, belongs to the multisubunit FA complex composed of FANCA, FANCB, FANCC, FANCE, FANCF, FANCG, FANCL/PHF9, FANCM and FAAP24. Interacts with FANCM.

It is found in the nucleus. Plays a role in DNA repair through recruitment of the FA core complex to damaged DNA. Regulates FANCD2 monoubiquitination upon DNA damage. Induces chromosomal instability as well as hypersensitivity to DNA cross-linking agents, when repressed. Targets FANCM/FAAP24 complex to the DNA, preferentially to single strand DNA. The chain is Fanconi anemia core complex-associated protein 24 from Homo sapiens (Human).